The chain runs to 426 residues: Serine--tRNA ligase (426 aa).

T230 to E232 provides a ligand contact to L-serine. R261–E263 contributes to the ATP binding site. E284 is an L-serine binding site. Residue E348–S351 coordinates ATP. Position 385 (S385) interacts with L-serine.

This sequence belongs to the class-II aminoacyl-tRNA synthetase family. Type-1 seryl-tRNA synthetase subfamily. As to quaternary structure, homodimer. The tRNA molecule binds across the dimer.

It localises to the cytoplasm. The enzyme catalyses tRNA(Ser) + L-serine + ATP = L-seryl-tRNA(Ser) + AMP + diphosphate + H(+). The catalysed reaction is tRNA(Sec) + L-serine + ATP = L-seryl-tRNA(Sec) + AMP + diphosphate + H(+). It functions in the pathway aminoacyl-tRNA biosynthesis; selenocysteinyl-tRNA(Sec) biosynthesis; L-seryl-tRNA(Sec) from L-serine and tRNA(Sec): step 1/1. Its function is as follows. Catalyzes the attachment of serine to tRNA(Ser). Is also able to aminoacylate tRNA(Sec) with serine, to form the misacylated tRNA L-seryl-tRNA(Sec), which will be further converted into selenocysteinyl-tRNA(Sec). In Wolbachia pipientis subsp. Culex pipiens (strain wPip), this protein is Serine--tRNA ligase.